We begin with the raw amino-acid sequence, 116 residues long: Large ribosomal subunit protein bL19 (116 aa).

It belongs to the bacterial ribosomal protein bL19 family.

This protein is located at the 30S-50S ribosomal subunit interface and may play a role in the structure and function of the aminoacyl-tRNA binding site. The chain is Large ribosomal subunit protein bL19 from Histophilus somni (strain 129Pt) (Haemophilus somnus).